The primary structure comprises 90 residues: Small cysteine-rich outer membrane protein OmcA (90 aa).

Positions 1–19 (MKKAVLIAAMFCGVVSLSS) are cleaved as a signal peptide. Residue Cys20 is the site of N-palmitoyl cysteine attachment. A lipid anchor (S-diacylglycerol cysteine) is attached at Cys20. A disordered region spans residues 69–90 (TECNSQSPQVKGCTSPDGRCKQ).

As to quaternary structure, part of a disulfide cross-linked outer membrane complex (COMC) composed of the major outer membrane porin (MOMP), the small cysteine-rich protein (OmcA) and the large cysteine-rich periplasmic protein (OmcB).

It is found in the cell outer membrane. In terms of biological role, in elementary bodies (EBs, the infectious stage, which is able to survive outside the host cell) provides the structural integrity of the outer envelope through disulfide cross-links with the large cysteine-rich periplasmic protein and the major outer membrane porin. It has been described in publications as the Sarkosyl-insoluble COMC (Chlamydia outer membrane complex), and serves as the functional equivalent of peptidoglycan. The polypeptide is Small cysteine-rich outer membrane protein OmcA (omcA) (Chlamydia pneumoniae (Chlamydophila pneumoniae)).